Here is a 603-residue protein sequence, read N- to C-terminus: Elongation factor 4 (603 aa).

A tr-type G domain is found at 7-189 (VRIRNFCIIA…AVVERIPPPP (183 aa)). Residues 19-24 (DHGKST) and 136-139 (NKID) each bind GTP.

It belongs to the TRAFAC class translation factor GTPase superfamily. Classic translation factor GTPase family. LepA subfamily.

The protein resides in the cell inner membrane. It carries out the reaction GTP + H2O = GDP + phosphate + H(+). Functionally, required for accurate and efficient protein synthesis under certain stress conditions. May act as a fidelity factor of the translation reaction, by catalyzing a one-codon backward translocation of tRNAs on improperly translocated ribosomes. Back-translocation proceeds from a post-translocation (POST) complex to a pre-translocation (PRE) complex, thus giving elongation factor G a second chance to translocate the tRNAs correctly. Binds to ribosomes in a GTP-dependent manner. The polypeptide is Elongation factor 4 (Nostoc punctiforme (strain ATCC 29133 / PCC 73102)).